A 260-amino-acid chain; its full sequence is Protein FAM220A (260 aa).

2 disordered regions span residues 1–75 (MKAG…SKAS) and 129–158 (GSDW…GRPG). Positions 35–47 (RNPSPSVVPSWTD) are enriched in polar residues.

As to quaternary structure, interacts with transcriptional activator STAT3; the interaction occurs in both the nucleus and the cytoplasm, is enhanced by IL6 and promotes STAT3 dephosphorylation, leading to negative regulation of STAT3 transcriptional activator activity. Can interact with both unphosphorylated and phosphorylated STAT3 but interacts preferentially with phosphorylated STAT3 in the nucleus. Interacts with protein phosphatase PTPN2/TC45; this promotes interaction of PTPN2 with STAT3, leading to dephosphorylation of STAT3 by PTPN2. Expressed at high levels in the testis where it is detected within elongated spermatids during the late stages (steps 9-16) of haploid germ cell development and in the tubular lumen (at protein level).

It localises to the nucleus. It is found in the cytoplasm. The protein localises to the cytoplasmic vesicle. The protein resides in the secretory vesicle. Its subcellular location is the acrosome. Functionally, promotes dephosphorylation of transcriptional activator STAT3 by interacting with both STAT3 and protein phosphatase PTPN2. This promotes interaction of PTPN2 with STAT3 and mediates STAT3 dephosphorylation by PTPN2, leading to negative regulation of STAT3 transcriptional activator activity. May be required for spermiogenesis or sperm function. This chain is Protein FAM220A, found in Mus musculus (Mouse).